A 153-amino-acid polypeptide reads, in one-letter code: Ribosomal RNA large subunit methyltransferase H (153 aa).

Residues Leu70, Gly102, and 121 to 126 each bind S-adenosyl-L-methionine; that span reads LSSMTF.

The protein belongs to the RNA methyltransferase RlmH family. Homodimer.

Its subcellular location is the cytoplasm. It carries out the reaction pseudouridine(1915) in 23S rRNA + S-adenosyl-L-methionine = N(3)-methylpseudouridine(1915) in 23S rRNA + S-adenosyl-L-homocysteine + H(+). In terms of biological role, specifically methylates the pseudouridine at position 1915 (m3Psi1915) in 23S rRNA. This is Ribosomal RNA large subunit methyltransferase H from Dictyoglomus thermophilum (strain ATCC 35947 / DSM 3960 / H-6-12).